The sequence spans 151 residues: Ribosome maturation factor RimP (151 aa).

It belongs to the RimP family.

The protein resides in the cytoplasm. Its function is as follows. Required for maturation of 30S ribosomal subunits. The protein is Ribosome maturation factor RimP of Haemophilus influenzae (strain 86-028NP).